Reading from the N-terminus, the 491-residue chain is Probable glycine dehydrogenase (decarboxylating) subunit 2 (491 aa).

An N6-(pyridoxal phosphate)lysine modification is found at Lys273.

It belongs to the GcvP family. C-terminal subunit subfamily. In terms of assembly, the glycine cleavage system is composed of four proteins: P, T, L and H. In this organism, the P 'protein' is a heterodimer of two subunits. Pyridoxal 5'-phosphate serves as cofactor.

It carries out the reaction N(6)-[(R)-lipoyl]-L-lysyl-[glycine-cleavage complex H protein] + glycine + H(+) = N(6)-[(R)-S(8)-aminomethyldihydrolipoyl]-L-lysyl-[glycine-cleavage complex H protein] + CO2. The glycine cleavage system catalyzes the degradation of glycine. The P protein binds the alpha-amino group of glycine through its pyridoxal phosphate cofactor; CO(2) is released and the remaining methylamine moiety is then transferred to the lipoamide cofactor of the H protein. This chain is Probable glycine dehydrogenase (decarboxylating) subunit 2, found in Bacillus thuringiensis (strain Al Hakam).